We begin with the raw amino-acid sequence, 157 residues long: Transcriptional repressor NrdR (157 aa).

Positions 1-26 (MRCPKCGGSKSSVIDSRQAEDGNTIR) are disordered. The segment at 3–34 (CPKCGGSKSSVIDSRQAEDGNTIRRRRECEDC) is a zinc-finger region. Over residues 17–26 (RQAEDGNTIR) the composition is skewed to basic and acidic residues. Residues 49–139 (LVVVKKDGTR…VYRSFKDVGE (91 aa)) form the ATP-cone domain.

Belongs to the NrdR family. The cofactor is Zn(2+).

Its function is as follows. Negatively regulates transcription of bacterial ribonucleotide reductase nrd genes and operons by binding to NrdR-boxes. This chain is Transcriptional repressor NrdR, found in Streptococcus gordonii (strain Challis / ATCC 35105 / BCRC 15272 / CH1 / DL1 / V288).